The primary structure comprises 256 residues: Gamma carbonic anhydrase-like 2, mitochondrial (256 aa).

The transit peptide at 1–33 (MATSLARISKRSITSAVSSNLIRRYFAAEAVAV) directs the protein to the mitochondrion. Residues 103-105 (RGD) and 118-119 (QE) contribute to the substrate site. Histidine 124 contacts Zn(2+). Substrate contacts are provided by arginine 152, glutamine 164, and tyrosine 231.

It belongs to the gamma-class carbonic anhydrase family. As to quaternary structure, component of the mitochondrial oxidoreductase respiratory chain complex I; element of the extra matrix-exposed domain, which is attached to the membrane arm of this complex. Interacts with GAMMACA2.

It localises to the mitochondrion membrane. Involved in complex I assembly in mitochondria and respiration. This is Gamma carbonic anhydrase-like 2, mitochondrial (GAMMACAL2) from Arabidopsis thaliana (Mouse-ear cress).